Consider the following 273-residue polypeptide: Putative pyruvate, phosphate dikinase regulatory protein (273 aa).

An ADP-binding site is contributed by 149–156; the sequence is GPSRTSKT.

It belongs to the pyruvate, phosphate/water dikinase regulatory protein family. PDRP subfamily.

The enzyme catalyses N(tele)-phospho-L-histidyl/L-threonyl-[pyruvate, phosphate dikinase] + ADP = N(tele)-phospho-L-histidyl/O-phospho-L-threonyl-[pyruvate, phosphate dikinase] + AMP + H(+). It carries out the reaction N(tele)-phospho-L-histidyl/O-phospho-L-threonyl-[pyruvate, phosphate dikinase] + phosphate + H(+) = N(tele)-phospho-L-histidyl/L-threonyl-[pyruvate, phosphate dikinase] + diphosphate. In terms of biological role, bifunctional serine/threonine kinase and phosphorylase involved in the regulation of the pyruvate, phosphate dikinase (PPDK) by catalyzing its phosphorylation/dephosphorylation. The chain is Putative pyruvate, phosphate dikinase regulatory protein from Rickettsia felis (strain ATCC VR-1525 / URRWXCal2) (Rickettsia azadi).